The primary structure comprises 306 residues: MIFQRTVQKMVKTTGVGLHSGNKVTLSIMPAPVNSGIVLVRTDLSPAVAIPAKAEQVRETTMCTALVNDEGIRISTIEHLFAALAGLGIDNAVIEVDAPEIPIMDGSASPFVFLLQSAGIKEQAAPKKYLKIKRPVRVEDGDKWAELKPFKGFRVNFKIDFAHPEIARSQQHVVMDFSTSAFVKDISRARTFGFMRDIEYLRANNLALGGSMENAVVLDEYRVLNPDGLRYEDEFVKHKILDAFGDLYVAGHAILGEFTAYKTGHALNNQLVRALLAQQDAWELVSFEKEADVPVSFTVPGGAVFA.

His-79, His-238, and Asp-242 together coordinate Zn(2+). The active-site Proton donor is His-265.

Belongs to the LpxC family. Zn(2+) serves as cofactor.

The enzyme catalyses a UDP-3-O-[(3R)-3-hydroxyacyl]-N-acetyl-alpha-D-glucosamine + H2O = a UDP-3-O-[(3R)-3-hydroxyacyl]-alpha-D-glucosamine + acetate. Its pathway is glycolipid biosynthesis; lipid IV(A) biosynthesis; lipid IV(A) from (3R)-3-hydroxytetradecanoyl-[acyl-carrier-protein] and UDP-N-acetyl-alpha-D-glucosamine: step 2/6. Functionally, catalyzes the hydrolysis of UDP-3-O-myristoyl-N-acetylglucosamine to form UDP-3-O-myristoylglucosamine and acetate, the committed step in lipid A biosynthesis. The polypeptide is UDP-3-O-acyl-N-acetylglucosamine deacetylase (Shewanella baltica (strain OS223)).